The primary structure comprises 147 residues: UPF0735 ACT domain-containing protein BPUM_2431 (147 aa).

The ACT domain maps to 70–145 (TLFFHLEDRS…FVEKVEILGS (76 aa)).

This sequence belongs to the UPF0735 family.

The sequence is that of UPF0735 ACT domain-containing protein BPUM_2431 from Bacillus pumilus (strain SAFR-032).